Reading from the N-terminus, the 432-residue chain is Probable exopolygalacturonase C (432 aa).

Residues 1–20 (MPISKGIFLSLLSTLPLALA) form the signal peptide. Asparagine 33, asparagine 73, asparagine 90, and asparagine 140 each carry an N-linked (GlcNAc...) asparagine glycan. PbH1 repeat units lie at residues 206 to 227 (GTNI…AVGS) and 229 to 250 (SHDI…SIGS). Catalysis depends on aspartate 220, which acts as the Proton donor. Histidine 244 is an active-site residue. An N-linked (GlcNAc...) asparagine glycan is attached at asparagine 260. A PbH1 3 repeat occupies 261-282 (ITNLRFEDVTVIDALYAARFKS). N-linked (GlcNAc...) asparagine glycosylation is found at asparagine 292 and asparagine 302. Cysteine 377 and cysteine 383 form a disulfide bridge. An N-linked (GlcNAc...) asparagine glycan is attached at asparagine 407.

Belongs to the glycosyl hydrolase 28 family.

Its subcellular location is the secreted. It catalyses the reaction [(1-&gt;4)-alpha-D-galacturonosyl](n) + H2O = alpha-D-galacturonate + [(1-&gt;4)-alpha-D-galacturonosyl](n-1). Specific in hydrolyzing the terminal glycosidic bond of polygalacturonic acid and oligogalacturonates. This chain is Probable exopolygalacturonase C (pgxC), found in Aspergillus terreus (strain NIH 2624 / FGSC A1156).